The following is a 696-amino-acid chain: Probable glutamine--fructose-6-phosphate aminotransferase [isomerizing] (696 aa).

The active-site For GATase activity is Cys-2. Residues 2–303 form the Glutamine amidotransferase type-2 domain; sequence CGIFGYINYL…DDDIAHVRDG (302 aa). 2 consecutive SIS domains span residues 375 to 514 and 547 to 686; these read YYDI…DSVS and AIEQ…VDQP.

It carries out the reaction D-fructose 6-phosphate + L-glutamine = D-glucosamine 6-phosphate + L-glutamate. It functions in the pathway nucleotide-sugar biosynthesis; UDP-N-acetyl-alpha-D-glucosamine biosynthesis; alpha-D-glucosamine 6-phosphate from D-fructose 6-phosphate: step 1/1. Functionally, involved in amino sugar synthesis (formation of chitin, supplies the amino sugars of asparagine-linked oligosaccharides of glycoproteins). The chain is Probable glutamine--fructose-6-phosphate aminotransferase [isomerizing] from Schizosaccharomyces pombe (strain 972 / ATCC 24843) (Fission yeast).